Here is a 254-residue protein sequence, read N- to C-terminus: Ferritin-1, chloroplastic (254 aa).

Residues 1–47 (MASKALSSFTAKPAVSLLPHGVSSSASPSVMSLSFSRHTGGRGVVAA) constitute a chloroplast transit peptide. The extension peptide (EP) stretch occupies residues 48 to 86 (SSTVDTNNMPMTGVVFQPFEEVKKADLAIPITSNASLAR). The Ferritin-like diiron domain maps to 87-240 (QRYADSSEAA…DFITQLRMVG (154 aa)). Fe cation contacts are provided by Glu-104, Glu-139, His-142, Glu-188, and Gln-222.

It belongs to the ferritin family. In terms of assembly, oligomer of 24 subunits. There are two types of subunits: L (light) chain and H (heavy) chain. The major chain can be light or heavy, depending on the species and tissue type. The functional molecule forms a roughly spherical shell with a diameter of 12 nm and contains a central cavity into which the insoluble mineral iron core is deposited.

The protein resides in the plastid. It is found in the chloroplast. The enzyme catalyses 4 Fe(2+) + O2 + 4 H(+) = 4 Fe(3+) + 2 H2O. Functionally, stores iron in a soluble, non-toxic, readily available form. Important for iron homeostasis. Has ferroxidase activity. Iron is taken up in the ferrous form and deposited as ferric hydroxides after oxidation. The polypeptide is Ferritin-1, chloroplastic (LSC30) (Brassica napus (Rape)).